The sequence spans 444 residues: tRNA modification GTPase MnmE (444 aa).

Positions 23, 82, and 121 each coordinate (6S)-5-formyl-5,6,7,8-tetrahydrofolate. The TrmE-type G domain maps to 216–365; the sequence is GTSIVLAGLP…LKQALQKWLN (150 aa). Asparagine 226 contributes to the K(+) binding site. Residues 226–231, 245–251, and 270–273 each bind GTP; these read NAGKSS, TDIPGTT, and DSAG. Serine 230 contacts Mg(2+). Residues threonine 245, isoleucine 247, and threonine 250 each coordinate K(+). Threonine 251 is a Mg(2+) binding site. Lysine 444 is a (6S)-5-formyl-5,6,7,8-tetrahydrofolate binding site.

It belongs to the TRAFAC class TrmE-Era-EngA-EngB-Septin-like GTPase superfamily. TrmE GTPase family. As to quaternary structure, homodimer. Heterotetramer of two MnmE and two MnmG subunits. K(+) serves as cofactor.

It localises to the cytoplasm. Its function is as follows. Exhibits a very high intrinsic GTPase hydrolysis rate. Involved in the addition of a carboxymethylaminomethyl (cmnm) group at the wobble position (U34) of certain tRNAs, forming tRNA-cmnm(5)s(2)U34. The sequence is that of tRNA modification GTPase MnmE from Chlamydia trachomatis serovar L2 (strain ATCC VR-902B / DSM 19102 / 434/Bu).